A 101-amino-acid chain; its full sequence is Protein Tat (101 aa).

The interaction with human CREBBP stretch occupies residues 1-24 (MEPVDPNLEPWKHPGSQPRTACNN). Residues 1 to 48 (MEPVDPNLEPWKHPGSQPRTACNNCYCKKCCFHCQVCFTKKGLGISYG) form a transactivation region. Zn(2+)-binding residues include C22, C25, and C27. The tract at residues 22 to 37 (CNNCYCKKCCFHCQVC) is cysteine-rich. At K28 the chain carries N6-acetyllysine; by host PCAF. Zn(2+) contacts are provided by C30, H33, C34, and C37. The tract at residues 38–48 (FTKKGLGISYG) is core. Residues 47–101 (YGRKKRRQRRRPPQDSQTHQSSLSKQPTSQLRGDPTGPTESKKKVERETETDPVH) form a disordered region. A compositionally biased stretch (basic residues) spans 48–57 (GRKKRRQRRR). The Nuclear localization signal, RNA-binding (TAR), and protein transduction signature appears at 49 to 57 (RKKRRQRRR). Positions 49-86 (RKKRRQRRRPPQDSQTHQSSLSKQPTSQLRGDPTGPTE) are interaction with the host capping enzyme RNGTT. N6-acetyllysine; by host EP300 and GCN5L2 occurs at positions 50 and 51. R52 and R53 each carry asymmetric dimethylarginine; by host PRMT6. Residues 61-77 (DSQTHQSSLSKQPTSQL) are compositionally biased toward polar residues. K71 participates in a covalent cross-link: Glycyl lysine isopeptide (Lys-Gly) (interchain with G-Cter in ubiquitin). The Cell attachment site motif lies at 78 to 80 (RGD). Positions 86–101 (ESKKKVERETETDPVH) are enriched in basic and acidic residues.

This sequence belongs to the lentiviruses Tat family. In terms of assembly, interacts with host CCNT1. Associates with the P-TEFb complex composed at least of Tat, P-TEFb (CDK9 and CCNT1), TAR RNA, RNA Pol II. Recruits the HATs CREBBP, TAF1/TFIID, EP300, PCAF and GCN5L2. Interacts with host KAT5/Tip60; this interaction targets the latter to degradation. Interacts with the host deacetylase SIRT1. Interacts with host capping enzyme RNGTT; this interaction stimulates RNGTT. Binds to host KDR, and to the host integrins ITGAV/ITGB3 and ITGA5/ITGB1. Interacts with host KPNB1/importin beta-1 without previous binding to KPNA1/importin alpha-1. Interacts with EIF2AK2. Interacts with host nucleosome assembly protein NAP1L1; this interaction may be required for the transport of Tat within the nucleus, since the two proteins interact at the nuclear rim. Interacts with host C1QBP/SF2P32; this interaction involves lysine-acetylated Tat. Interacts with the host chemokine receptors CCR2, CCR3 and CXCR4. Interacts with host DPP4/CD26; this interaction may trigger an anti-proliferative effect. Interacts with host LDLR. Interacts with the host extracellular matrix metalloproteinase MMP1. Interacts with host PRMT6; this interaction mediates Tat's methylation. Interacts with, and is ubiquitinated by MDM2/Hdm2. Interacts with host PSMC3 and HTATIP2. Interacts with STAB1; this interaction may overcome SATB1-mediated repression of IL2 and IL2RA (interleukin) in T cells by binding to the same domain than HDAC1. Interacts (when acetylated) with human CDK13, thereby increasing HIV-1 mRNA splicing and promoting the production of the doubly spliced HIV-1 protein Nef. Interacts with host TBP; this interaction modulates the activity of transcriptional pre-initiation complex. Interacts with host RELA. Interacts with host PLSCR1; this interaction negatively regulates Tat transactivation activity by altering its subcellular distribution. Asymmetrical arginine methylation by host PRMT6 seems to diminish the transactivation capacity of Tat and affects the interaction with host CCNT1. In terms of processing, acetylation by EP300, CREBBP, GCN5L2/GCN5 and PCAF regulates the transactivation activity of Tat. EP300-mediated acetylation of Lys-50 promotes dissociation of Tat from the TAR RNA through the competitive binding to PCAF's bromodomain. In addition, the non-acetylated Tat's N-terminus can also interact with PCAF. PCAF-mediated acetylation of Lys-28 enhances Tat's binding to CCNT1. Lys-50 is deacetylated by SIRT1. Post-translationally, polyubiquitination by host MDM2 does not target Tat to degradation, but activates its transactivation function and fosters interaction with CCNT1 and TAR RNA. Phosphorylated by EIF2AK2 on serine and threonine residues adjacent to the basic region important for TAR RNA binding and function. Phosphorylation of Tat by EIF2AK2 is dependent on the prior activation of EIF2AK2 by dsRNA.

The protein resides in the host nucleus. The protein localises to the host nucleolus. It is found in the host cytoplasm. Its subcellular location is the secreted. Functionally, transcriptional activator that increases RNA Pol II processivity, thereby increasing the level of full-length viral transcripts. Recognizes a hairpin structure at the 5'-LTR of the nascent viral mRNAs referred to as the transactivation responsive RNA element (TAR) and recruits the cyclin T1-CDK9 complex (P-TEFb complex) that will in turn hyperphosphorylate the RNA polymerase II to allow efficient elongation. The CDK9 component of P-TEFb and other Tat-activated kinases hyperphosphorylate the C-terminus of RNA Pol II that becomes stabilized and much more processive. Other factors such as HTATSF1/Tat-SF1, SUPT5H/SPT5, and HTATIP2 are also important for Tat's function. Besides its effect on RNA Pol II processivity, Tat induces chromatin remodeling of proviral genes by recruiting the histone acetyltransferases (HATs) CREBBP, EP300 and PCAF to the chromatin. This also contributes to the increase in proviral transcription rate, especially when the provirus integrates in transcriptionally silent region of the host genome. To ensure maximal activation of the LTR, Tat mediates nuclear translocation of NF-kappa-B by interacting with host RELA. Through its interaction with host TBP, Tat may also modulate transcription initiation. Tat can reactivate a latently infected cell by penetrating in it and transactivating its LTR promoter. In the cytoplasm, Tat is thought to act as a translational activator of HIV-1 mRNAs. Extracellular circulating Tat can be endocytosed by surrounding uninfected cells via the binding to several surface receptors such as CD26, CXCR4, heparan sulfate proteoglycans (HSPG) or LDLR. Neurons are rarely infected, but they internalize Tat via their LDLR. Through its interaction with nuclear HATs, Tat is potentially able to control the acetylation-dependent cellular gene expression. Modulates the expression of many cellular genes involved in cell survival, proliferation or in coding for cytokines or cytokine receptors. Tat plays a role in T-cell and neurons apoptosis. Tat induced neurotoxicity and apoptosis probably contribute to neuroAIDS. Circulating Tat also acts as a chemokine-like and/or growth factor-like molecule that binds to specific receptors on the surface of the cells, affecting many cellular pathways. In the vascular system, Tat binds to ITGAV/ITGB3 and ITGA5/ITGB1 integrins dimers at the surface of endothelial cells and competes with bFGF for heparin-binding sites, leading to an excess of soluble bFGF. The chain is Protein Tat from Human immunodeficiency virus type 1 group M subtype B (isolate YU-2) (HIV-1).